The sequence spans 338 residues: 1-aminocyclopropane-1-carboxylate deaminase (338 aa).

Position 51 is an N6-(pyridoxal phosphate)lysine (Lys51). The active-site Nucleophile is Ser78.

This sequence belongs to the ACC deaminase/D-cysteine desulfhydrase family. Homotrimer. Requires pyridoxal 5'-phosphate as cofactor.

It carries out the reaction 1-aminocyclopropane-1-carboxylate + H2O = 2-oxobutanoate + NH4(+). Functionally, catalyzes a cyclopropane ring-opening reaction, the irreversible conversion of 1-aminocyclopropane-1-carboxylate (ACC) to ammonia and alpha-ketobutyrate. Allows growth on ACC as a nitrogen source. The protein is 1-aminocyclopropane-1-carboxylate deaminase of Burkholderia pseudomallei (strain 1710b).